A 236-amino-acid chain; its full sequence is Phospholipid hydroperoxide glutathione peroxidase, chloroplastic (236 aa).

Residues 1–64 constitute a chloroplast transit peptide; sequence MASMAFSTTF…SNFPIVPSKT (64 aa). Residue C111 is part of the active site.

This sequence belongs to the glutathione peroxidase family.

It is found in the plastid. The protein resides in the chloroplast stroma. The catalysed reaction is a hydroperoxy polyunsaturated fatty acid + 2 glutathione = a hydroxy polyunsaturated fatty acid + glutathione disulfide + H2O. Protects cells and enzymes from oxidative damage, by catalyzing the reduction of hydrogen peroxide, lipid peroxides and organic hydroperoxide, by glutathione. This is Phospholipid hydroperoxide glutathione peroxidase, chloroplastic from Pisum sativum (Garden pea).